The chain runs to 37 residues: Large ribosomal subunit protein bL36 (37 aa).

Belongs to the bacterial ribosomal protein bL36 family.

The protein is Large ribosomal subunit protein bL36 (rpmJ) of Geobacillus stearothermophilus (Bacillus stearothermophilus).